The sequence spans 483 residues: Keratin, type II cytoskeletal 7 (483 aa).

Serine 2 bears the N-acetylserine mark. A phosphoserine mark is found at serine 2, serine 6, and serine 7. Positions 2–107 (SVQFSSQTFS…DPQIQQVRKE (106 aa)) are head. Serine 12 is a glycosylation site (O-linked (GlcNAc) serine). Residues 14–37 (SAAFPRRGGQGRLSSVSSRAGSVS) are disordered. Dimethylated arginine; alternate is present on arginine 20. Arginine 20 carries the post-translational modification Omega-N-methylarginine; alternate. The segment covering 25–37 (RLSSVSSRAGSVS) has biased composition (low complexity). 2 positions are modified to phosphoserine: serine 63 and serine 88. The coil 1A stretch occupies residues 107-143 (EEREQIKTLNNKFASFIDKVRFLEQQNQMLETKWRLL). The 313-residue stretch at 108–420 (EREQIKTLNN…KLLEGEESRL (313 aa)) folds into the IF rod domain. Threonine 114 is subject to Phosphothreonine. The interval 144 to 161 (QEQKSSKGSSLPAIFEAH) is linker 1. A Glycyl lysine isopeptide (Lys-Gly) (interchain with G-Cter in SUMO2) cross-link involves residue lysine 147. The coil 1B stretch occupies residues 162 to 253 (IANLRRQLDG…TLYEMELNEL (92 aa)). Lysine 196 bears the N6-acetyllysine mark. Residues 254-277 (QTQISDTSVVLSMDNSRSLDLDSI) are linker 12. Serine 269 and serine 271 each carry phosphoserine. A coil 2 region spans residues 278–416 (ISEVKAQYED…ATYRKLLEGE (139 aa)). Glycyl lysine isopeptide (Lys-Gly) (interchain with G-Cter in SUMO2) cross-links involve residues lysine 282 and lysine 303. Threonine 306 is modified (phosphothreonine). Glycyl lysine isopeptide (Lys-Gly) (interchain with G-Cter in SUMO2) cross-links involve residues lysine 313 and lysine 348. Residues 417 to 483 (ESRLSGDGVG…TSSSRRSVRN (67 aa)) are tail.

This sequence belongs to the intermediate filament family. In terms of assembly, heterotetramer of two type I and two type II keratins. Interacts with eukaryotic translation initiator factor 3 (eIF3) subunit EIF3S10. Interacts with GPER1. Post-translationally, arg-20 is dimethylated, probably to asymmetric dimethylarginine.

Blocks interferon-dependent interphase and stimulates DNA synthesis in cells. The chain is Keratin, type II cytoskeletal 7 from Potorous tridactylus (Potoroo).